Reading from the N-terminus, the 80-residue chain is RNA-binding protein KhpA (80 aa).

Positions 33–80 constitute a KH domain; it reads GRTVEVHVHPDDLGKVIGRGGRTATALRTLVAGIGGRGIRVDVVDTDQ.

The protein belongs to the KhpA RNA-binding protein family.

The protein resides in the cytoplasm. Its function is as follows. A probable RNA-binding protein. In Mycobacterium bovis (strain ATCC BAA-935 / AF2122/97), this protein is RNA-binding protein KhpA.